The primary structure comprises 216 residues: Large ribosomal subunit protein uL3 (216 aa).

At Gln-153 the chain carries N5-methylglutamine.

This sequence belongs to the universal ribosomal protein uL3 family. Part of the 50S ribosomal subunit. Forms a cluster with proteins L14 and L19. Methylated by PrmB.

One of the primary rRNA binding proteins, it binds directly near the 3'-end of the 23S rRNA, where it nucleates assembly of the 50S subunit. The protein is Large ribosomal subunit protein uL3 of Burkholderia multivorans (strain ATCC 17616 / 249).